The chain runs to 336 residues: Galactose/methyl galactoside import permease protein MglC (336 aa).

A run of 9 helical transmembrane segments spans residues glycine 17 to leucine 37, isoleucine 53 to glycine 73, leucine 107 to isoleucine 127, alanine 128 to isoleucine 148, phenylalanine 181 to tryptophan 201, valine 227 to leucine 247, threonine 257 to valine 277, phenylalanine 279 to isoleucine 299, and isoleucine 306 to alanine 326.

Belongs to the binding-protein-dependent transport system permease family. AraH/RbsC subfamily. As to quaternary structure, the complex is composed of one ATP-binding protein (MglA), two transmembrane proteins (MglC) and a solute-binding protein (MglB).

It is found in the cell inner membrane. Its function is as follows. Part of the ABC transporter complex MglABC involved in galactose/methyl galactoside import. Probably responsible for the translocation of the substrate across the membrane. The protein is Galactose/methyl galactoside import permease protein MglC (mglC) of Salmonella typhimurium (strain LT2 / SGSC1412 / ATCC 700720).